A 460-amino-acid chain; its full sequence is Argininosuccinate lyase (460 aa).

Belongs to the lyase 1 family. Argininosuccinate lyase subfamily.

The protein resides in the cytoplasm. The enzyme catalyses 2-(N(omega)-L-arginino)succinate = fumarate + L-arginine. It functions in the pathway amino-acid biosynthesis; L-arginine biosynthesis; L-arginine from L-ornithine and carbamoyl phosphate: step 3/3. The sequence is that of Argininosuccinate lyase from Maridesulfovibrio salexigens (strain ATCC 14822 / DSM 2638 / NCIMB 8403 / VKM B-1763) (Desulfovibrio salexigens).